A 235-amino-acid chain; its full sequence is Post-translational flagellin modification protein B (235 aa).

Belongs to the CMP-NeuNAc synthase family.

Its function is as follows. Required for biosynthesis of LAH modification in the post-translational modification of Campylobacter coli flagellin. In Campylobacter coli, this protein is Post-translational flagellin modification protein B (ptmB).